We begin with the raw amino-acid sequence, 998 residues long: Calcium-transporting ATPase 3, endoplasmic reticulum-type (998 aa).

The Cytoplasmic portion of the chain corresponds to 1-48 (MEDAYARSVSEVLDFFGVDPTKGLSDSQVVHHSRLYGRNVLPEEKRTP). Residues 49 to 69 (FWKLVLKQFDDLLVKILIVAA) form a helical membrane-spanning segment. Residues 70-89 (IVSFVLALANGETGLTAFLE) lie on the Lumenal side of the membrane. The helical transmembrane segment at 90-109 (PFVILLILAANAAVGVITET) threads the bilayer. Residues 110–250 (NAEKALEELR…DEATPLKKKL (141 aa)) lie on the Cytoplasmic side of the membrane. The helical transmembrane segment at 251 to 270 (DEFGSFLAKVIAGICVLVWV) threads the bilayer. The Lumenal portion of the chain corresponds to 271 to 291 (VNIGHFSDPSHGGFFKGAIHY). The chain crosses the membrane as a helical span at residues 292 to 309 (FKIAVALAVAAIPEGLPA). Ca(2+) is bound by residues valine 300, alanine 301, isoleucine 303, and glutamate 305. The Cytoplasmic portion of the chain corresponds to 310–746 (VVTTCLALGT…AEGRAIYNNT (437 aa)). Residue aspartate 347 is the 4-aspartylphosphate intermediate of the active site. Aspartate 692 and aspartate 696 together coordinate Mg(2+). The helical transmembrane segment at 747–766 (KQFIRYMISSNIGEVVCIFV) threads the bilayer. Residues asparagine 757 and glutamate 760 each coordinate Ca(2+). Over 767 to 776 (AAVLGIPDTL) the chain is Lumenal. Residues 777 to 797 (APVQLLWVNLVTDGLPATAIG) form a helical membrane-spanning segment. The Ca(2+) site is built by asparagine 785, threonine 788, and aspartate 789. Over 798–817 (FNKQDSDVMKAKPRKVGEAV) the chain is Cytoplasmic. Residues 818–840 (VTGWLFFRYLVIGVYVGLATVAG) traverse the membrane as a helical segment. Residues 841 to 883 (FIWWFVYSDGGPKLTYSELMNFETCALRETTYPCSIFEDRHPS) are Lumenal-facing. Residues 884-903 (TVAMTVLVVVEMFNALNNLS) traverse the membrane as a helical segment. Glutamate 894 contacts Ca(2+). The Cytoplasmic segment spans residues 904–916 (ENQSLLVITPRSN). The chain crosses the membrane as a helical span at residues 917 to 935 (LWLVGSIILTMLLHVLILY). The Lumenal segment spans residues 936-950 (VHPLAVLFSVTPLSW). The chain crosses the membrane as a helical span at residues 951 to 971 (AEWTAVLYLSFPVIIIDELLK). Topologically, residues 972 to 998 (FLSRNTGMRFRFRLRKADLLPKDRRDK) are cytoplasmic.

It belongs to the cation transport ATPase (P-type) (TC 3.A.3) family. Type IIA subfamily. As to expression, expressed in root cap, in elongation and differentiation zones of roots, in vascular tissues of roots, leaves, floral pedicels and style, in leaves, including hydathodes and guard cells, in stamens, in petals, in sepals and in siliques.

It is found in the golgi apparatus membrane. Its subcellular location is the endosome membrane. It localises to the prevacuolar compartment membrane. The enzyme catalyses Ca(2+)(in) + ATP + H2O = Ca(2+)(out) + ADP + phosphate + H(+). This magnesium-dependent enzyme catalyzes the hydrolysis of ATP coupled with the translocation of calcium from the cytosol to an endomembrane compartment. Involved in calcium-enhanced root growth, in tolerance to toxic levels of manganese and in secretory processes. Has a crucial role in manganese nutrition, but is not involved in transporting copper, iron or zinc. This Arabidopsis thaliana (Mouse-ear cress) protein is Calcium-transporting ATPase 3, endoplasmic reticulum-type.